The primary structure comprises 470 residues: E3 SUMO-protein ligase EGR2 (470 aa).

Over residues 126-141 (PPASTTASSSVTSASP) the composition is skewed to low complexity. Disordered stretches follow at residues 126 to 153 (PPAS…GVCT), 159 to 178 (PELD…SGCT), and 185 to 210 (PSAF…SYPS). Low complexity predominate over residues 190-202 (SPPSTTSTSSLAY). An N6-acetyllysine; by EP300 modification is found at lysine 247. A compositionally biased stretch (gly residues) spans 275–291 (GPGAGVTGPGASGGGEG). The disordered stretch occupies residues 275 to 345 (GPGAGVTGPG…PYPCPAEGCD (71 aa)). 3 C2H2-type zinc fingers span residues 337–361 (YPCP…IRIH), 367–389 (FQCR…IRTH), and 395–417 (FACD…TKIH). Residues 408–470 (DERKRHTKIH…ASCTSRTRTP (63 aa)) form a disordered region. Residues 412 to 422 (RHTKIHLRQKE) show a composition bias toward basic residues. Over residues 426 to 439 (SAPSAPPSAQSSAS) the composition is skewed to low complexity. The span at 440–450 (GPGGSQAGGSL) shows a compositional bias: gly residues.

This sequence belongs to the EGR C2H2-type zinc-finger protein family. As to quaternary structure, interacts with HCFC1. Interacts with WWP2. Interacts with UBC9. Interacts with CITED1. Interacts (via phosphorylated form) with SFN. Post-translationally, ubiquitinated by WWP2 leading to proteasomal degradation. Acetylated at Lys-247. May be deacetylated by HDAC6, HDAC10 or SIRT1. Expressed mainly in the thymus.

Its subcellular location is the nucleus. The protein operates within protein modification; protein sumoylation. Its function is as follows. Sequence-specific DNA-binding transcription factor. Plays a role in hindbrain segmentation by regulating the expression of a subset of homeobox containing genes and in Schwann cell myelination by regulating the expression of genes involved in the formation and maintenance of myelin. Binds to two EGR2-consensus sites EGR2A (5'-CTGTAGGAG-3') and EGR2B (5'-ATGTAGGTG-3') in the HOXB3 enhancer and promotes HOXB3 transcriptional activation. Binds to specific DNA sites located in the promoter region of HOXA4, HOXB2 and ERBB2. Regulates hindbrain segmentation by controlling the expression of Hox genes, such as HOXA4, HOXB3 and HOXB2, and thereby specifying odd and even rhombomeres. Promotes the expression of HOXB3 in the rhombomere r5 and of HOXB3 in r3 and r5 in the hindbrain. Regulates myelination in the peripheral nervous system after birth, possibly by regulating the expression of myelin proteins, such as MPZ, and by promoting the differentiation of Schwann cells. Involved in the development of the jaw openener musculature, probably by playing a role in its innervation through trigeminal motor neurons. May play a role in adipogenesis, possibly by regulating the expression of CEBPB. In terms of biological role, E3 SUMO-protein ligase helping SUMO1 conjugation to its coregulators NAB1 and NAB2, whose sumoylation down-regulates EGR2 transcriptional activity. In Mus musculus (Mouse), this protein is E3 SUMO-protein ligase EGR2 (Egr2).